The chain runs to 384 residues: Transcriptional regulator of the unfolded protein response hacA (384 aa).

Residues 1-18 (MTESTFAVETFSMDSMSP) show a composition bias toward polar residues. 2 disordered regions span residues 1 to 27 (MTES…IPRL) and 41 to 94 (LVPE…QRRI). A compositionally biased stretch (basic and acidic residues) spans 84–94 (KTEDEKEQRRI). Positions 90–153 (EQRRIERVLR…NRLSQQVAKL (64 aa)) constitute a bZIP domain. Residues 92–101 (RRIERVLRNR) form a basic motif region. Positions 106 to 113 (ISRERKRL) are leucine-zipper. Disordered stretches follow at residues 208-256 (SIPF…PSDL) and 331-384 (PDED…AGAQ). The segment covering 218-240 (STTTTTTTTTTTSNNISSTSSTT) has biased composition (low complexity).

It belongs to the bZIP family.

The protein resides in the nucleus. Functionally, master transcriptional regulator of the unfolded protein response (UPR) that recognizes and binds to the UPR element (UPRE) in the promoter of UPR-regulated genes. Exposure to antifungals and ER-stressing agents initiates the activation of hacA which occurs when a 20 nucleotide fragment is removed from part of the exon-2 and part of intron-2, which in turn promotes the arisen of the DNA binding site motif and a dimer interface domain. Modulates the expression of genes related to cell wall synthesis, ergosterol biosynthesis, pigmentation, heat shock proteins, and the genes coding for mannosyltransferase enzymes. Plays a key role in both response to stress and host-pathogen interaction. The sequence is that of Transcriptional regulator of the unfolded protein response hacA from Trichophyton rubrum (strain ATCC MYA-4607 / CBS 118892) (Athlete's foot fungus).